Consider the following 396-residue polypeptide: MIQTKDIIELTDTYGANNYHPLPIVISKAEGVWVEDPEGNRYMDLLSAYSAVNQGHRHPKIINALIDQANRVTLTSRAFHSDQLGPWYEKVAKLTNKEMVLPMNTGAEAVETAIKTARRWAYDVKKVEANRAEIIVCEDNFHGRTMGAVSMSSNEEYKRGFGPMLPGIIVIPYGDLEALKAAITPNTAAFILEPIQGEAGINIPPAGFLKEALEVCKKENVLFVADEIQTGLGRTGKVFACDWDNVTPDMYILGKALGGGVFPISCVAANRDILGVFEPGSHGSTFGGNPLACAVSIAALEVLEEEKLTERSLQLGEKLVGQLKEIDNPMITEVRGKGLFIGIELNEPARPYCEQLKAAGLLCKETHENVIRIAPPLVISEEDLEWAFQKIKAVLS.

K255 carries the N6-(pyridoxal phosphate)lysine modification.

This sequence belongs to the class-III pyridoxal-phosphate-dependent aminotransferase family. OAT subfamily. Pyridoxal 5'-phosphate is required as a cofactor.

The protein localises to the cytoplasm. The catalysed reaction is a 2-oxocarboxylate + L-ornithine = L-glutamate 5-semialdehyde + an L-alpha-amino acid. Its pathway is amino-acid biosynthesis; L-proline biosynthesis; L-glutamate 5-semialdehyde from L-ornithine: step 1/1. Catalyzes the interconversion of ornithine to glutamate semialdehyde. The protein is Ornithine aminotransferase of Bacillus cereus (strain 03BB102).